We begin with the raw amino-acid sequence, 379 residues long: Sulfate adenylyltransferase (379 aa).

The protein belongs to the sulfate adenylyltransferase family.

The catalysed reaction is sulfate + ATP + H(+) = adenosine 5'-phosphosulfate + diphosphate. It participates in sulfur metabolism; hydrogen sulfide biosynthesis; sulfite from sulfate: step 1/3. This is Sulfate adenylyltransferase (sat) from Pyrococcus abyssi (strain GE5 / Orsay).